A 192-amino-acid chain; its full sequence is Signal peptidase complex catalytic subunit sec11 (192 aa).

Residues 1–18 (MLSFLSSNLSSTRQSMAQ) lie on the Cytoplasmic side of the membrane. Residues 19–39 (VLNFALVLSTAFMLWKGLSVF) form a helical; Signal-anchor for type II membrane protein membrane-spanning segment. At 40 to 192 (TASSSPIVVV…GLMVILQREQ (153 aa)) the chain is on the lumenal side. Active-site charge relay system residues include S53, H92, and D133. A C-terminal short (CTS) helix region spans residues 177–188 (VLLGIMGLMVIL).

Belongs to the peptidase S26B family. Component of the signal peptidase complex (SPC) composed of a catalytic subunit SEC11 and three accessory subunits SPC1, SPC2 and SPC3. The complex induces a local thinning of the ER membrane which is used to measure the length of the signal peptide (SP) h-region of protein substrates. This ensures the selectivity of the complex towards h-regions shorter than 18-20 amino acids. SPC associates with the translocon complex.

It is found in the endoplasmic reticulum membrane. It catalyses the reaction Cleavage of hydrophobic, N-terminal signal or leader sequences from secreted and periplasmic proteins.. Its function is as follows. Catalytic component of the signal peptidase complex (SPC) which catalyzes the cleavage of N-terminal signal sequences from nascent proteins as they are translocated into the lumen of the endoplasmic reticulum. Specifically cleaves N-terminal signal peptides that contain a hydrophobic alpha-helix (h-region) shorter than 18-20 amino acids. This Aspergillus fumigatus (strain CBS 144.89 / FGSC A1163 / CEA10) (Neosartorya fumigata) protein is Signal peptidase complex catalytic subunit sec11 (sec11).